Here is a 242-residue protein sequence, read N- to C-terminus: Triosephosphate isomerase (242 aa).

Substrate is bound at residue 9-11 (NWK). Residue histidine 99 is the Electrophile of the active site. Catalysis depends on glutamate 169, which acts as the Proton acceptor. Residues glycine 175, serine 207, and 228–229 (GG) contribute to the substrate site.

This sequence belongs to the triosephosphate isomerase family. In terms of assembly, homodimer.

It localises to the cytoplasm. The catalysed reaction is D-glyceraldehyde 3-phosphate = dihydroxyacetone phosphate. It functions in the pathway carbohydrate biosynthesis; gluconeogenesis. It participates in carbohydrate degradation; glycolysis; D-glyceraldehyde 3-phosphate from glycerone phosphate: step 1/1. Involved in the gluconeogenesis. Catalyzes stereospecifically the conversion of dihydroxyacetone phosphate (DHAP) to D-glyceraldehyde-3-phosphate (G3P). The polypeptide is Triosephosphate isomerase (Mycoplasma mobile (strain ATCC 43663 / 163K / NCTC 11711) (Mesomycoplasma mobile)).